Here is a 100-residue protein sequence, read N- to C-terminus: Putative septation protein SpoVG (100 aa).

Belongs to the SpoVG family.

In terms of biological role, could be involved in septation. The protein is Putative septation protein SpoVG of Staphylococcus aureus (strain MRSA252).